Here is a 399-residue protein sequence, read N- to C-terminus: tRNA-specific 2-thiouridylase MnmA (399 aa).

Residues 18–25 and L44 contribute to the ATP site; that span reads AMSGGVDS. Catalysis depends on C112, which acts as the Nucleophile. A disulfide bond links C112 and C213. ATP is bound at residue G136. The interval 163 to 165 is interaction with tRNA; that stretch reads RDQ. Residue C213 is the Cysteine persulfide intermediate of the active site.

This sequence belongs to the MnmA/TRMU family.

The protein resides in the cytoplasm. It catalyses the reaction S-sulfanyl-L-cysteinyl-[protein] + uridine(34) in tRNA + AH2 + ATP = 2-thiouridine(34) in tRNA + L-cysteinyl-[protein] + A + AMP + diphosphate + H(+). In terms of biological role, catalyzes the 2-thiolation of uridine at the wobble position (U34) of tRNA, leading to the formation of s(2)U34. The polypeptide is tRNA-specific 2-thiouridylase MnmA (Rhizobium leguminosarum bv. trifolii (strain WSM2304)).